A 197-amino-acid chain; its full sequence is Nucleoid occlusion factor SlmA (197 aa).

The HTH tetR-type domain occupies 7-67; it reads INRREHILQC…GLIDFIEESL (61 aa). The H-T-H motif DNA-binding region spans 30-49; the sequence is TTAKLAAEVGVSEAALYRHF.

Belongs to the nucleoid occlusion factor SlmA family. Homodimer. Interacts with FtsZ.

Its subcellular location is the cytoplasm. The protein resides in the nucleoid. Required for nucleoid occlusion (NO) phenomenon, which prevents Z-ring formation and cell division over the nucleoid. Acts as a DNA-associated cell division inhibitor that binds simultaneously chromosomal DNA and FtsZ, and disrupts the assembly of FtsZ polymers. SlmA-DNA-binding sequences (SBS) are dispersed on non-Ter regions of the chromosome, preventing FtsZ polymerization at these regions. This chain is Nucleoid occlusion factor SlmA, found in Shewanella woodyi (strain ATCC 51908 / MS32).